The primary structure comprises 364 residues: Dihydroorotase (364 aa).

Zn(2+)-binding residues include His-14, His-16, Lys-98, His-137, His-180, and Asp-258. Lys-98 is modified (N6-carboxylysine).

It belongs to the metallo-dependent hydrolases superfamily. DHOase family. Class II DHOase subfamily. Zn(2+) is required as a cofactor.

It carries out the reaction (S)-dihydroorotate + H2O = N-carbamoyl-L-aspartate + H(+). The protein operates within pyrimidine metabolism; UMP biosynthesis via de novo pathway; (S)-dihydroorotate from bicarbonate: step 3/3. Functionally, catalyzes the conversion of ureidosuccinic acid (USA) to dihydroorotate, the third step of the de novo pyrimidine biosynthetic pathway. This is Dihydroorotase (URA4) from Saccharomyces cerevisiae (strain ATCC 204508 / S288c) (Baker's yeast).